The primary structure comprises 155 residues: Ribosomal RNA large subunit methyltransferase H (155 aa).

S-adenosyl-L-methionine contacts are provided by residues Leu72, Gly104, and 123-128 (LSKMTF).

It belongs to the RNA methyltransferase RlmH family. As to quaternary structure, homodimer.

Its subcellular location is the cytoplasm. The catalysed reaction is pseudouridine(1915) in 23S rRNA + S-adenosyl-L-methionine = N(3)-methylpseudouridine(1915) in 23S rRNA + S-adenosyl-L-homocysteine + H(+). Its function is as follows. Specifically methylates the pseudouridine at position 1915 (m3Psi1915) in 23S rRNA. The protein is Ribosomal RNA large subunit methyltransferase H of Cytophaga hutchinsonii (strain ATCC 33406 / DSM 1761 / CIP 103989 / NBRC 15051 / NCIMB 9469 / D465).